A 107-amino-acid chain; its full sequence is ALRKVDRNRFVLDNVTPQPREAKRYKEEEEFPGHGRRRRRRSKGKGKAKGKGKGKGKRRRRRKGKGKGKGKKKGKGRRRRCRRGRGCKKRKGKKGKGRRRRRGKKGK.

2 stretches are compositionally biased toward basic and acidic residues: residues A1–F10 and R20–G33. Positions A1–G35 are cleaved as a propeptide — removed in mature form. The disordered stretch occupies residues A1–K107. Over residues H34–K107 the composition is skewed to basic residues. At S42 the chain carries Phosphoserine.

In terms of processing, a series of N-terminal cleavages yield the mature protein. Post-translationally, only the mature protein is phosphorylated. In terms of tissue distribution, gonads.

The protein localises to the nucleus. The protein resides in the chromosome. Functionally, protamines substitute for histones in the chromatin of sperm during the haploid phase of spermatogenesis. They compact sperm DNA into a highly condensed, stable and inactive complex. The sequence is that of Sperm protamine P1 from Bolinus brandaris (Purple dye murex).